The following is a 90-amino-acid chain: Sec-independent protein translocase protein TatA (90 aa).

A helical transmembrane segment spans residues 1–21; that stretch reads MGGASIWHWIVVGVIVMLLFG. The disordered stretch occupies residues 42–90; sequence GMADEDQPQAPVANQSPPPVSATEPVRTLPPHQGEPAPAANASVDRKVG.

Belongs to the TatA/E family. In terms of assembly, the Tat system comprises two distinct complexes: a TatABC complex, containing multiple copies of TatA, TatB and TatC subunits, and a separate TatA complex, containing only TatA subunits. Substrates initially bind to the TatABC complex, which probably triggers association of the separate TatA complex to form the active translocon.

It localises to the cell inner membrane. Its function is as follows. Part of the twin-arginine translocation (Tat) system that transports large folded proteins containing a characteristic twin-arginine motif in their signal peptide across membranes. TatA could form the protein-conducting channel of the Tat system. This is Sec-independent protein translocase protein TatA from Methylobacterium nodulans (strain LMG 21967 / CNCM I-2342 / ORS 2060).